A 503-amino-acid chain; its full sequence is Aromatase (503 aa).

The next 3 membrane-spanning stretches (helical) occupy residues 19–39 (EVVPIASIAILLLTGFLLLVW), 53–73 (FLGIGPLISHCRFLWMGIGSA), and 303–323 (MLIAAPDTMSVSVFFMLFLIA). Residues D309 and M374 each coordinate substrate. Position 437 (C437) interacts with heme.

The protein belongs to the cytochrome P450 family. It depends on heme as a cofactor.

It is found in the endoplasmic reticulum membrane. It localises to the microsome membrane. It catalyses the reaction testosterone + 3 reduced [NADPH--hemoprotein reductase] + 3 O2 = 17beta-estradiol + formate + 3 oxidized [NADPH--hemoprotein reductase] + 4 H2O + 4 H(+). The catalysed reaction is androst-4-ene-3,17-dione + 3 reduced [NADPH--hemoprotein reductase] + 3 O2 = estrone + formate + 3 oxidized [NADPH--hemoprotein reductase] + 4 H2O + 4 H(+). The enzyme catalyses androst-4-ene-3,17-dione + reduced [NADPH--hemoprotein reductase] + O2 = 19-hydroxyandrost-4-ene-3,17-dione + oxidized [NADPH--hemoprotein reductase] + H2O + H(+). It carries out the reaction 19-hydroxyandrost-4-ene-3,17-dione + reduced [NADPH--hemoprotein reductase] + O2 = 19-oxo-androst-4-ene-3,17-dione + oxidized [NADPH--hemoprotein reductase] + 2 H2O + H(+). It catalyses the reaction 19-oxo-androst-4-ene-3,17-dione + reduced [NADPH--hemoprotein reductase] + O2 = estrone + formate + oxidized [NADPH--hemoprotein reductase] + H2O + 2 H(+). The catalysed reaction is estrone + reduced [NADPH--hemoprotein reductase] + O2 = 2-hydroxyestrone + oxidized [NADPH--hemoprotein reductase] + H2O + H(+). The enzyme catalyses 17beta-hydroxy-5alpha-androstan-3-one + reduced [NADPH--hemoprotein reductase] + O2 = 17beta,19-dihydroxy-3-oxo-5alpha-androstanone + oxidized [NADPH--hemoprotein reductase] + H2O + H(+). It carries out the reaction 17beta,19-dihydroxy-3-oxo-5alpha-androstanone + reduced [NADPH--hemoprotein reductase] + O2 = 17beta-hydroxy-3,19-dioxo-5alpha-androstanone + oxidized [NADPH--hemoprotein reductase] + 2 H2O + H(+). It catalyses the reaction 17beta-hydroxy-3,19-dioxo-5alpha-androstanone + reduced [NADPH--hemoprotein reductase] + O2 = 17beta-hydroxy-3-oxo-19-nor-5alpha-androst-1-ene + formate + oxidized [NADPH--hemoprotein reductase] + H2O + 2 H(+). The protein operates within steroid hormone biosynthesis. Its function is as follows. A cytochrome P450 monooxygenase that catalyzes the conversion of C19 androgens, androst-4-ene-3,17-dione (androstenedione) and testosterone to the C18 estrogens, estrone and estradiol, respectively. Catalyzes three successive oxidations of C19 androgens: two conventional oxidations at C19 yielding 19-hydroxy and 19-oxo/19-aldehyde derivatives, followed by a third oxidative aromatization step that involves C1-beta hydrogen abstraction combined with cleavage of the C10-C19 bond to yield a phenolic A ring and formic acid. Alternatively, the third oxidative reaction yields a 19-norsteroid and formic acid. Converts dihydrotestosterone to delta1,10-dehydro 19-nordihydrotestosterone and may play a role in homeostasis of this potent androgen. Also displays 2-hydroxylase activity toward estrone. Mechanistically, uses molecular oxygen inserting one oxygen atom into a substrate, and reducing the second into a water molecule, with two electrons provided by NADPH via cytochrome P450 reductase (CPR; NADPH-ferrihemoprotein reductase). The protein is Aromatase (CYP19A1) of Capra hircus (Goat).